We begin with the raw amino-acid sequence, 1697 residues long: SAC3 family protein B (1697 aa).

Disordered regions lie at residues 54–134 (PPAS…QPGG), 167–280 (QRPN…SRSN), 306–413 (EATR…EQAR), and 491–512 (ESERGERERKGDLDHYERVDGD). Positions 120–134 (QNPSPSSGQPYQPGG) are enriched in low complexity. Residues 178 to 192 (DGSRNFLKDHGEHSR) show a composition bias toward basic and acidic residues. Polar residues predominate over residues 193–202 (ATSPPATSHI). Residues 215 to 227 (RSQDSKRKSRSDI) show a composition bias toward basic and acidic residues. Composition is skewed to polar residues over residues 233–243 (MGFSRRNQSPV), 257–280 (PLSSRTWMRSPSSAENNPVRSRSN), and 335–380 (RFST…SPAT). Residues 625 to 813 (NIEQMNKTSV…KCSKLVHMKK (189 aa)) form the PCI domain.

The protein belongs to the SAC3 family. As to quaternary structure, interacts with SAC3A, EER5 and CML19. Interacts with UCH1 and UCH2.

Its subcellular location is the nucleus. In terms of biological role, component of the TREX-2 complex (transcription and export complex 2), a muliprotein complex that functions in docking export-competent ribonucleoprotein particles (mRNPs) to the nuclear entrance of the nuclear pore complex (nuclear basket). TREX-2 participates in mRNA export and accurate chromatin positioning in the nucleus by tethering genes to the nuclear periphery. This Arabidopsis thaliana (Mouse-ear cress) protein is SAC3 family protein B.